The following is a 476-amino-acid chain: Aspartyl/glutamyl-tRNA(Asn/Gln) amidotransferase subunit B (476 aa).

It belongs to the GatB/GatE family. GatB subfamily. Heterotrimer of A, B and C subunits.

It carries out the reaction L-glutamyl-tRNA(Gln) + L-glutamine + ATP + H2O = L-glutaminyl-tRNA(Gln) + L-glutamate + ADP + phosphate + H(+). The catalysed reaction is L-aspartyl-tRNA(Asn) + L-glutamine + ATP + H2O = L-asparaginyl-tRNA(Asn) + L-glutamate + ADP + phosphate + 2 H(+). In terms of biological role, allows the formation of correctly charged Asn-tRNA(Asn) or Gln-tRNA(Gln) through the transamidation of misacylated Asp-tRNA(Asn) or Glu-tRNA(Gln) in organisms which lack either or both of asparaginyl-tRNA or glutaminyl-tRNA synthetases. The reaction takes place in the presence of glutamine and ATP through an activated phospho-Asp-tRNA(Asn) or phospho-Glu-tRNA(Gln). This Clostridium botulinum (strain Alaska E43 / Type E3) protein is Aspartyl/glutamyl-tRNA(Asn/Gln) amidotransferase subunit B.